A 513-amino-acid polypeptide reads, in one-letter code: Ribonuclease Y (513 aa).

Residues 4–24 traverse the membrane as a helical segment; the sequence is TTSLIIAILAGILGIVIGFFF. The disordered stretch occupies residues 78-106; that stretch reads KSRLKEISRQEDRLNSKEENLERKNASLE. Residues 203 to 288 form the KH domain; that stretch reads TVSVVNLPND…EMVEKARKDV (86 aa). Residues 329–422 form the HD domain; the sequence is VLKHSIEVSN…VQSADAISAA (94 aa).

It belongs to the RNase Y family.

It is found in the cell membrane. Functionally, endoribonuclease that initiates mRNA decay. The chain is Ribonuclease Y from Finegoldia magna (strain ATCC 29328 / DSM 20472 / WAL 2508) (Peptostreptococcus magnus).